Reading from the N-terminus, the 208-residue chain is Protein-L-isoaspartate O-methyltransferase (208 aa).

The active site involves Ser59.

It belongs to the methyltransferase superfamily. L-isoaspartyl/D-aspartyl protein methyltransferase family.

It localises to the cytoplasm. The catalysed reaction is [protein]-L-isoaspartate + S-adenosyl-L-methionine = [protein]-L-isoaspartate alpha-methyl ester + S-adenosyl-L-homocysteine. Catalyzes the methyl esterification of L-isoaspartyl residues in peptides and proteins that result from spontaneous decomposition of normal L-aspartyl and L-asparaginyl residues. It plays a role in the repair and/or degradation of damaged proteins. In Shigella sonnei (strain Ss046), this protein is Protein-L-isoaspartate O-methyltransferase.